Consider the following 944-residue polypeptide: Leucine--tRNA ligase 2 (944 aa).

A 'HIGH' region motif is present at residues 36 to 46 (PYPNSPFHLGH). Positions 621-625 (KMSKS) match the 'KMSKS' region motif. Lys-624 is a binding site for ATP.

The protein belongs to the class-I aminoacyl-tRNA synthetase family.

It localises to the cytoplasm. It catalyses the reaction tRNA(Leu) + L-leucine + ATP = L-leucyl-tRNA(Leu) + AMP + diphosphate. In Sulfurisphaera tokodaii (strain DSM 16993 / JCM 10545 / NBRC 100140 / 7) (Sulfolobus tokodaii), this protein is Leucine--tRNA ligase 2.